The chain runs to 372 residues: Cyclin-dependent kinase 9 (372 aa).

The region spanning 19–315 is the Protein kinase domain; it reads YEKLAKIGQG…SDDALNHDFF (297 aa). Residue 25–33 participates in ATP binding; that stretch reads IGQGTFGEV. An N6-acetyllysine; by EP300/CBP, PCAF/KAT2B and GCN5/KAT2A modification is found at lysine 44. ATP contacts are provided by residues lysine 48 and 104 to 106; that span reads DFC. Lysine 48 bears the N6-acetyllysine; by PCAF/KAT2B and GCN5/KAT2A mark. Aspartate 149 acts as the Proton acceptor in catalysis. The T-loop stretch occupies residues 166–191; the sequence is ADFGLARAFSLAKNSQPNRYTNRVVT. Aspartate 167 is an ATP binding site. Phosphoserine is present on serine 175. Position 186 is a phosphothreonine; by CaMK1D (threonine 186). The interval 343-372 is disordered; it reads RRKGSQITQQSTNQSRNPATTNQTEFERVF. Phosphoserine; by CDK9 and PKA is present on serine 347. The segment covering 347–366 has biased composition (polar residues); it reads SQITQQSTNQSRNPATTNQT. A Phosphothreonine; by CDK9 modification is found at threonine 350. At serine 353 the chain carries Phosphoserine; by CDK9. Residue threonine 354 is modified to Phosphothreonine; by CDK9. Serine 357 bears the Phosphoserine; by CDK9 mark. Phosphothreonine; by CDK9 is present on residues threonine 362 and threonine 363.

The protein belongs to the protein kinase superfamily. CMGC Ser/Thr protein kinase family. CDC2/CDKX subfamily. As to quaternary structure, component of the super elongation complex (SEC), at least composed of EAF1, EAF2, CDK9, MLLT3/AF9, AFF (AFF1 or AFF4), the P-TEFb complex and ELL (ELL, ELL2 or ELL3). Associates with CCNT1/cyclin-T1, CCNT2/cyclin-T2 (isoform A and isoform B) or CCNK/cyclin-K to form active P-TEFb. P-TEFb forms a complex with AFF4/AF5Q31 and is part of the super elongation complex (SEC). Component of a complex which is composed of at least 5 members: HTATSF1/Tat-SF1, P-TEFb complex, RNA pol II, SUPT5H, and NCL/nucleolin. Associates with UBR5 and forms a transcription regulatory complex composed of CDK9, RNAP II, UBR5 and TFIIS/TCEA1 that can stimulate target gene transcription (e.g. gamma fibrinogen/FGG) by recruiting their promoters. Component of the 7SK snRNP inactive complex which is composed of at least 8 members: P-TEFb (composed of CDK9 and CCNT1/cyclin-T1), HEXIM1, HEXIM2, LARP7, BCDIN3, SART3 proteins and 7SK and U6 snRNAs. This inactive 7SK snRNP complex can also interact with NCOR1 and HDAC3, probably to regulate CDK9 acetylation. Release of P-TEFb from P-TEFb/7SK snRNP complex requires both PP2B to transduce calcium Ca(2+) signaling in response to stimuli (e.g. UV or hexamethylene bisacetamide (HMBA)), and PPP1CA to dephosphorylate Thr-186. This released P-TEFb remains inactive in the pre-initiation complex with BRD4 until new Thr-186 phosphorylation occurs after the synthesis of a short RNA. Interacts with BRD4; to target chromatin binding. Interacts with JMJD6. Interacts with activated nuclear STAT3 and RELA/p65. Binds to AR and MYOD1. Forms a complex composed of CDK9, CCNT1/cyclin-T1, EP300 and GATA4 that stimulates hypertrophy in cardiomyocytes. The large PER complex involved in the repression of transcriptional termination is composed of at least PER2, CDK9, DDX5, DHX9, NCBP1 and POLR2A. Interacts with HSF1. Interacts with TBX21. Interacts with WDR43. Interacts with ZMYND8; the association appears to occur between homodimeric ZMYND8 and the activated form of the P-TEFb complex. In terms of processing, autophosphorylation at Thr-186, Ser-347, Thr-350, Ser-353, Thr-354 and Ser-357 triggers kinase activity by promoting cyclin and substrate binding upon conformational changes. Thr-186 phosphorylation requires the calcium Ca(2+) signaling pathway, including CaMK1D and calmodulin. This inhibition is relieved by Thr-29 dephosphorylation. Phosphorylation at Ser-175 inhibits kinase activity. Can be phosphorylated on either Thr-362 or Thr-363 but not on both simultaneously. Post-translationally, dephosphorylation of Thr-186 by PPM1A and PPM1B blocks CDK9 activity and may lead to CDK9 proteasomal degradation. However, PPP1CA-mediated Thr-186 dephosphorylation is required to release P-TEFb from its inactive P-TEFb/7SK snRNP complex. Dephosphorylated at Ser-347 by the PNUTS-PP1 complex during RNA polymerase II transcription pause-release. Dephosphorylation of C-terminus Thr and Ser residues by protein phosphatase-1 (PP1) triggers CDK9 activity. N6-acetylation of Lys-44 promotes kinase activity, whereas acetylation of both Lys-44 and Lys-48 mediated by PCAF/KAT2B and GCN5/KAT2A reduces kinase activity. The acetylated form associates with PML bodies in the nuclear matrix and with the transcriptionally silent HIV-1 genome; deacetylated upon transcription stimulation. Deacetylated by SIRT7, promoting the kinase activity and subsequent 'Ser-2' phosphorylation of the C-terminal domain (CTD) of RNA polymerase II. In terms of processing, polyubiquitinated and thus activated by UBR5. This ubiquitination is promoted by TFIIS/TCEA1 and favors 'Ser-2' phosphorylation of RPB1/POLR2A CTD.

The protein localises to the nucleus. It is found in the cytoplasm. It localises to the PML body. The catalysed reaction is L-seryl-[protein] + ATP = O-phospho-L-seryl-[protein] + ADP + H(+). It carries out the reaction L-threonyl-[protein] + ATP = O-phospho-L-threonyl-[protein] + ADP + H(+). It catalyses the reaction [DNA-directed RNA polymerase] + ATP = phospho-[DNA-directed RNA polymerase] + ADP + H(+). Its activity is regulated as follows. Activation by Thr-186 phosphorylation is calcium Ca(2+) signaling pathway-dependent; actively inactivated by dephosphorylation mediated by PPP1CA, PPM1A and PPM1B. Reversibly repressed by acetylation at Lys-44 and Lys-48. Functionally, protein kinase involved in the regulation of transcription. Member of the cyclin-dependent kinase pair (CDK9/cyclin-T) complex, also called positive transcription elongation factor b (P-TEFb), which facilitates the transition from abortive to productive elongation by phosphorylating the CTD (C-terminal domain) of the large subunit of RNA polymerase II (RNAP II) POLR2A, SUPT5H and RDBP. This complex is inactive when in the 7SK snRNP complex form. Phosphorylates EP300, MYOD1, RPB1/POLR2A and AR and the negative elongation factors DSIF and NELFE. Regulates cytokine inducible transcription networks by facilitating promoter recognition of target transcription factors (e.g. TNF-inducible RELA/p65 activation and IL-6-inducible STAT3 signaling). Promotes RNA synthesis in genetic programs for cell growth, differentiation and viral pathogenesis. P-TEFb is also involved in cotranscriptional histone modification, mRNA processing and mRNA export. Modulates a complex network of chromatin modifications including histone H2B monoubiquitination (H2Bub1), H3 lysine 4 trimethylation (H3K4me3) and H3K36me3; integrates phosphorylation during transcription with chromatin modifications to control co-transcriptional histone mRNA processing. The CDK9/cyclin-K complex has also a kinase activity towards CTD of RNAP II and can substitute for CDK9/cyclin-T P-TEFb in vitro. Replication stress response protein; the CDK9/cyclin-K complex is required for genome integrity maintenance, by promoting cell cycle recovery from replication arrest and limiting single-stranded DNA amount in response to replication stress, thus reducing the breakdown of stalled replication forks and avoiding DNA damage. In addition, probable function in DNA repair of isoform 2 via interaction with KU70/XRCC6. Promotes cardiac myocyte enlargement. RPB1/POLR2A phosphorylation on 'Ser-2' in CTD activates transcription. AR phosphorylation modulates AR transcription factor promoter selectivity and cell growth. DSIF and NELF phosphorylation promotes transcription by inhibiting their negative effect. The phosphorylation of MYOD1 enhances its transcriptional activity and thus promotes muscle differentiation. Catalyzes phosphorylation of KAT5, promoting KAT5 recruitment to chromatin and histone acetyltransferase activity. This is Cyclin-dependent kinase 9 (CDK9) from Bos taurus (Bovine).